A 455-amino-acid polypeptide reads, in one-letter code: Argininosuccinate lyase (455 aa).

The protein belongs to the lyase 1 family. Argininosuccinate lyase subfamily.

It is found in the cytoplasm. It catalyses the reaction 2-(N(omega)-L-arginino)succinate = fumarate + L-arginine. It functions in the pathway amino-acid biosynthesis; L-arginine biosynthesis; L-arginine from L-ornithine and carbamoyl phosphate: step 3/3. The chain is Argininosuccinate lyase from Roseiflexus sp. (strain RS-1).